We begin with the raw amino-acid sequence, 292 residues long: MQKLIEKANTLMEALPYIRRFSGKTIVIKYGGHAMADEALKKSFALDVILLKYIGINTVIVHGGGPQINETLKRYGIVSQFVKGMRVTDEATMGVVEMVLTGQVNKEVVGYLNQHGGRAVGLSGKDGGLLLCKKLLQEVKNEQGVLETVDIGFVGDVVDVDSSILVTLEAGGFIPVIAPIGVGTGGESYNINADVVAGKVAAALKAEKLILLTDVSGVKDQGGNLLSSIALGDVPGLIEDGTITGGMIPKVTCCTDALTGGVHKAHIVDGRIEHAILLEIFTNVGIGTEIQA.

Substrate-binding positions include glycine 64–glycine 65, arginine 86, and asparagine 190.

This sequence belongs to the acetylglutamate kinase family. ArgB subfamily.

The protein resides in the cytoplasm. The enzyme catalyses N-acetyl-L-glutamate + ATP = N-acetyl-L-glutamyl 5-phosphate + ADP. The protein operates within amino-acid biosynthesis; L-arginine biosynthesis; N(2)-acetyl-L-ornithine from L-glutamate: step 2/4. Catalyzes the ATP-dependent phosphorylation of N-acetyl-L-glutamate. This chain is Acetylglutamate kinase, found in Geotalea daltonii (strain DSM 22248 / JCM 15807 / FRC-32) (Geobacter daltonii).